A 46-amino-acid chain; its full sequence is uncharacterized protein (46 aa).

A helical membrane pass occupies residues 20–42 (MAMIWVVAALVIALVVGTALNYI).

The protein localises to the membrane. This is an uncharacterized protein from Bacillus subtilis (strain 168).